The sequence spans 577 residues: (E)-beta-farnesene synthase (577 aa).

The Mg(2+) site is built by Asp-327, Asp-331, Asp-474, Ser-478, and Glu-482. A DDXXD motif motif is present at residues 327 to 331; that stretch reads DDTFD.

Belongs to the terpene synthase family. It depends on Mg(2+) as a cofactor. The cofactor is Co(2+). Mn(2+) is required as a cofactor. As to expression, expressed in flowers.

It is found in the cytoplasm. It carries out the reaction (2E,6E)-farnesyl diphosphate = (E)-beta-farnesene + diphosphate. It functions in the pathway secondary metabolite biosynthesis; terpenoid biosynthesis. Strongly inhibited by manganese at concentration higher than 20 uM. In terms of biological role, sesquiterpene cyclase catalyzing the production of beta-farnesene from farnesyl diphosphate. Unable to use geranyl diphosphate as substrate. The protein is (E)-beta-farnesene synthase (CASC125) of Artemisia annua (Sweet wormwood).